Reading from the N-terminus, the 490-residue chain is Dual specificity protein kinase CLK3 (490 aa).

Positions 1-138 are disordered; the sequence is MHHCKRYRSP…SKRSSRSVED (138 aa). Tyr7 carries the phosphotyrosine modification. Residues Ser9, Ser49, Ser51, Ser67, Ser76, and Ser78 each carry the phosphoserine modification. Composition is skewed to basic and acidic residues over residues 26–56 and 63–76; these read YSRE…DRIP and EHRD…EERS. Basic residues predominate over residues 88–116; that stretch reads RSRHRRRSRERGPYRTRKHAHHCHKRRTR. The segment covering 117–130 has biased composition (low complexity); the sequence is SCSSASSRSQQSSK. Phosphoserine is present on Ser135. The Protein kinase domain maps to 156–472; sequence YEIVGNLGEG…LAEALLHPFF (317 aa). ATP contacts are provided by residues 162–170 and Lys186; that span reads LGEGTFGKV. Asp283 functions as the Proton acceptor in the catalytic mechanism.

This sequence belongs to the protein kinase superfamily. CMGC Ser/Thr protein kinase family. Lammer subfamily. In terms of processing, autophosphorylates on all three types of residues.

It is found in the nucleus. The protein localises to the cytoplasm. The protein resides in the cytoplasmic vesicle. Its subcellular location is the secretory vesicle. It localises to the acrosome. It carries out the reaction L-seryl-[protein] + ATP = O-phospho-L-seryl-[protein] + ADP + H(+). The enzyme catalyses L-threonyl-[protein] + ATP = O-phospho-L-threonyl-[protein] + ADP + H(+). It catalyses the reaction L-tyrosyl-[protein] + ATP = O-phospho-L-tyrosyl-[protein] + ADP + H(+). Its activity is regulated as follows. Leucettine L41 inhibits its kinase activity and affects the regulation of alternative splicing mediated by phosphorylation of SR proteins. Its function is as follows. Dual specificity kinase acting on both serine/threonine and tyrosine-containing substrates. Phosphorylates serine- and arginine-rich (SR) proteins of the spliceosomal complex. May be a constituent of a network of regulatory mechanisms that enable SR proteins to control RNA splicing and can cause redistribution of SR proteins from speckles to a diffuse nucleoplasmic distribution. Phosphorylates SRSF1 and SRSF3. Regulates the alternative splicing of tissue factor (F3) pre-mRNA in endothelial cells. The sequence is that of Dual specificity protein kinase CLK3 (Clk3) from Rattus norvegicus (Rat).